The sequence spans 84 residues: Cell division topological specificity factor (84 aa).

It belongs to the MinE family.

In terms of biological role, prevents the cell division inhibition by proteins MinC and MinD at internal division sites while permitting inhibition at polar sites. This ensures cell division at the proper site by restricting the formation of a division septum at the midpoint of the long axis of the cell. The sequence is that of Cell division topological specificity factor from Cupriavidus pinatubonensis (strain JMP 134 / LMG 1197) (Cupriavidus necator (strain JMP 134)).